The sequence spans 366 residues: Peptide chain release factor 2 (366 aa).

Gln251 is modified (N5-methylglutamine).

Belongs to the prokaryotic/mitochondrial release factor family. Post-translationally, methylated by PrmC. Methylation increases the termination efficiency of RF2.

The protein resides in the cytoplasm. Functionally, peptide chain release factor 2 directs the termination of translation in response to the peptide chain termination codons UGA and UAA. This Exiguobacterium sp. (strain ATCC BAA-1283 / AT1b) protein is Peptide chain release factor 2.